A 124-amino-acid polypeptide reads, in one-letter code: MQKIVLLGLAGALGSLARYGLAGLVQRAAPGSFPLGTFIVNVLGCLAFGFVWGVCENRISLHPDLRVVLLTGFMGAFTTFSTFTFESLGLMETGQWLAFALYAGGQLLLGLALLWLGLGTGRLV.

4 helical membrane-spanning segments follow: residues 4 to 24 (IVLL…LAGL), 35 to 55 (LGTF…WGVC), 67 to 87 (VVLL…TFES), and 96 to 116 (WLAF…LLWL). 2 residues coordinate Na(+): G75 and T78.

The protein belongs to the fluoride channel Fluc/FEX (TC 1.A.43) family.

It localises to the cell inner membrane. The enzyme catalyses fluoride(in) = fluoride(out). With respect to regulation, na(+) is not transported, but it plays an essential structural role and its presence is essential for fluoride channel function. Functionally, fluoride-specific ion channel. Important for reducing fluoride concentration in the cell, thus reducing its toxicity. This Nitratidesulfovibrio vulgaris (strain DSM 19637 / Miyazaki F) (Desulfovibrio vulgaris) protein is Fluoride-specific ion channel FluC.